A 335-amino-acid chain; its full sequence is Glutamyl-tRNA reductase (335 aa).

Residues 60–63 (TCHR), Ser110, 115–117 (ETE), and Gln121 each bind substrate. Cys61 acts as the Nucleophile in catalysis. 189 to 194 (GYSEIN) lines the NADP(+) pocket.

It belongs to the glutamyl-tRNA reductase family. As to quaternary structure, homodimer.

It catalyses the reaction (S)-4-amino-5-oxopentanoate + tRNA(Glu) + NADP(+) = L-glutamyl-tRNA(Glu) + NADPH + H(+). Its pathway is porphyrin-containing compound metabolism; protoporphyrin-IX biosynthesis; 5-aminolevulinate from L-glutamyl-tRNA(Glu): step 1/2. In terms of biological role, catalyzes the NADPH-dependent reduction of glutamyl-tRNA(Glu) to glutamate 1-semialdehyde (GSA). The polypeptide is Glutamyl-tRNA reductase (Chlamydia trachomatis serovar A (strain ATCC VR-571B / DSM 19440 / HAR-13)).